Here is a 92-residue protein sequence, read N- to C-terminus: Small ribosomal subunit protein uS19 (92 aa).

Belongs to the universal ribosomal protein uS19 family.

Functionally, protein S19 forms a complex with S13 that binds strongly to the 16S ribosomal RNA. This chain is Small ribosomal subunit protein uS19, found in Bifidobacterium animalis subsp. lactis (strain AD011).